The sequence spans 359 residues: Endosome-associated-trafficking regulator 1 (359 aa).

Phosphoserine occurs at positions 18 and 74. The required for interaction with PTPN13 stretch occupies residues 100–125; it reads LLDEDEDEEDGWNGAYLPSAMEQTHS. The segment at 153–180 is disordered; sequence SLPPWTLSDSDSRISPTGSPSADFTAHG. The span at 159 to 174 shows a compositional bias: polar residues; it reads LSDSDSRISPTGSPSA. Phosphoserine is present on residues Ser-167 and Ser-171. Residues 185–295 adopt a coiled-coil conformation; sequence DRHLRTLQIS…FKRENEALRS (111 aa).

Belongs to the ENTR1 family. In terms of assembly, found in a complex with ENTR1, PTPN13 and GIT1. Interacts with PTPN13 (via the FERM domain). Interacts (via N-terminus) with GIT1 (via N- and C-terminus); this interaction is direct. Interacts with NOD2. Interacts (via N-terminus) with IFT88. Interacts with VPS35. Post-translationally, phosphorylated.

It is found in the cytoplasm. The protein localises to the early endosome. It localises to the endosome. Its subcellular location is the recycling endosome. The protein resides in the midbody. It is found in the cytoskeleton. The protein localises to the microtubule organizing center. It localises to the centrosome. Its subcellular location is the cilium basal body. Functionally, endosome-associated protein that plays a role in membrane receptor sorting, cytokinesis and ciliogenesis. Involved in the endosome-to-plasma membrane trafficking and recycling of SNX27-retromer-dependent cargo proteins, such as GLUT1. Involved in the regulation of cytokinesis; the function may involve PTPN13 and GIT1. Plays a role in the formation of cilia. Involved in cargo protein localization, such as PKD2, at primary cilia. Involved in the presentation of the tumor necrosis factor (TNF) receptor TNFRSF1A on the cell surface, and hence in the modulation of the TNF-induced apoptosis. This is Endosome-associated-trafficking regulator 1 from Bos taurus (Bovine).